Reading from the N-terminus, the 524-residue chain is MVPQVLLFAPLLVFPLCFGKFPIYTIPDKLGPWSPIDLHHLSCPNNLVVEDEGCTNLSGFSYMELKVGYISAIKVNGFTCTGVVTEAETYTNFVGYVTTTFKRKHFRPTPDACRAAYNWKMAGDPRYEESLHNPYPDYHWLRTVKTTKESLVIISPSVTDLDPYDKSLHSRVFPGGNCSGITVSSTYCSTNHDYTIWMPENLRLGTSCDIFTHSRGKRASKGDKTCGFVDERGLYKSLKGACKLKLCGVLGLRLMDGTWVAMQTSDETKWCPPGQLVNLHDFRSDEIEHLVEEELVKKREECLDALESIMTTKSVSFRRLSHLRKLVPGFGKAYTIFNKTLMEADAHYKSVQTWNEIIPSKGCLRVGERCHPHVNGVFFNGIILGSDGHVLIPEMQSSLLQQHMELLESSVIPLMHPLADPSTVFKDGDEVEDFVEVHLPDVHKQVSGVDLGLPKWGKYVLMIAGALIALMLIIFLMTCCRRVNRPESTQSNLGGTGRNVSVPSQSGKVISSWESYKSGGETRL.

The signal sequence occupies residues 1–19 (MVPQVLLFAPLLVFPLCFG). Topologically, residues 20–459 (KFPIYTIPDK…DLGLPKWGKY (440 aa)) are virion surface. Cystine bridges form between Cys-43–Cys-302, Cys-54–Cys-226, Cys-80–Cys-113, Cys-178–Cys-188, Cys-208–Cys-247, and Cys-242–Cys-271. Asn-56 carries N-linked (GlcNAc...) asparagine; by host glycosylation. An N-linked (GlcNAc...) asparagine; by host glycan is attached at Asn-177. N-linked (GlcNAc...) asparagine; by host glycosylation occurs at Asn-338. Cys-363 and Cys-370 form a disulfide bridge. Residues 460–480 (VLMIAGALIALMLIIFLMTCC) traverse the membrane as a helical segment. Residue Cys-480 is the site of S-palmitoyl cysteine; by host attachment. The Intravirion portion of the chain corresponds to 481–524 (RRVNRPESTQSNLGGTGRNVSVPSQSGKVISSWESYKSGGETRL). The interval 487–506 (ESTQSNLGGTGRNVSVPSQS) is disordered.

Belongs to the lyssavirus glycoprotein family. As to quaternary structure, homotrimer. Interacts with matrix protein. Interacts with host TRFC. Interacts with host BST2; this interaction inhibits viral budding by tethering new virions to the cell surface. Interacts with ITGB1. Interacts with host GRM2. Post-translationally, glycosylated and palmitoylated by host. Glycosylation is crucial for glycoprotein export at the cell surface.

It is found in the virion membrane. Attaches the virus to host cellular receptor, inducing endocytosis of the virion by using different host proteins including TFRC, GRM2 and ITGB1. In the endosome, the acidic pH induces conformational changes in the glycoprotein trimer, which trigger fusion between virus and cell membrane. There is convincing in vitro evidence that the muscular form of the nicotinic acetylcholine receptor (nAChR), the neuronal cell adhesion molecule (NCAM), and the p75 neurotrophin receptor (p75NTR) bind glycoprotein and thereby facilitate rabies virus entry into cells. The polypeptide is Glycoprotein (G) (Homo sapiens (Human)).